The chain runs to 302 residues: Merozoite surface protein 2 (302 aa).

A signal peptide spans methionine 1–isoleucine 20. Asparagine 22 and asparagine 36 each carry an N-linked (GlcNAc...) asparagine glycan. Residues glutamate 44–serine 228 are polymorphic region. One copy of the 1; partial repeat lies at glycine 55–alanine 60. An 8 X 8 AA tandem repeats of G-S-G-A-G-A-V-A region spans residues glycine 55–glycine 113. Repeat copies occupy residues glycine 61–alanine 68, glycine 69–alanine 76, glycine 77–alanine 84, glycine 85–alanine 92, glycine 93–alanine 100, and glycine 101–alanine 108. An 8; partial repeat occupies glycine 109–glycine 113. A disordered region spans residues asparagine 114–asparagine 263. Residues serine 125–glutamate 150 show a composition bias toward low complexity. A compositionally biased stretch (basic and acidic residues) spans asparagine 151–valine 167. 2 stretches are compositionally biased toward polar residues: residues lysine 169–arginine 195 and lysine 202–proline 230. N-linked (GlcNAc...) asparagine glycosylation is present at asparagine 179. An N-linked (GlcNAc...) asparagine glycan is attached at asparagine 251. A disulfide bridge connects residues cysteine 259 and cysteine 267. Asparagine 275 and asparagine 276 each carry an N-linked (GlcNAc...) asparagine glycan. Asparagine 276 is lipidated: GPI-anchor amidated asparagine. A propeptide spans serine 277–isoleucine 302 (removed in mature form).

It localises to the cell membrane. Its function is as follows. May play a role in the merozoite attachment to the erythrocyte. The polypeptide is Merozoite surface protein 2 (Plasmodium falciparum (isolate tak 9)).